The primary structure comprises 252 residues: uncharacterized protein (252 aa).

The HTH deoR-type domain maps to 3–58; sequence AKDRIQAIKQMVANDKKVTVSNLSGIFQVTEETIRRDLEKLEDEGFLTRTYGGAVL. A DNA-binding region (H-T-H motif) is located at residues 20–39; it reads VTVSNLSGIFQVTEETIRRD.

This is an uncharacterized protein from Escherichia coli (strain K12).